Consider the following 418-residue polypeptide: Transmembrane protease serine 11D (418 aa).

Residues 1-20 (MYRPARVTSTSRFLNPYVVC) are Cytoplasmic-facing. The helical; Signal-anchor for type II membrane protein transmembrane segment at 21–41 (FIVVAGVVILAVTIALLVYFL) threads the bilayer. Over 42 to 418 (AFDQKSYFYR…LDWIRQQTGI (377 aa)) the chain is Extracellular. The SEA domain occupies 46–163 (KSYFYRSSFQ…STEITSLTDQ (118 aa)). A glycan (N-linked (GlcNAc...) asparagine) is linked at asparagine 144. Intrachain disulfides connect cysteine 173/cysteine 292, cysteine 212/cysteine 228, cysteine 337/cysteine 353, and cysteine 364/cysteine 393. The 231-residue stretch at 187-417 (ILGGTEAEEG…YLDWIRQQTG (231 aa)) folds into the Peptidase S1 domain. Catalysis depends on charge relay system residues histidine 227 and aspartate 272. The Charge relay system role is filled by serine 368.

It belongs to the peptidase S1 family. As to quaternary structure, monomer. In terms of tissue distribution, located in the cells of the submucosal serous glands of the bronchi and trachea.

The protein localises to the cell membrane. Its subcellular location is the secreted. With respect to regulation, strongly inhibited by diisopropyl fluorophosphate, leupeptin, antipain, aprotinin, and soybean trypsin inhibitor, but hardly inhibited by secretory leukocyte protease inhibitor at 10 microM. Its function is as follows. May play some biological role in the host defense system on the mucous membrane independently of or in cooperation with other substances in airway mucous or bronchial secretions. Plays a role in the proteolytic processing of ACE2. Proteolytically cleaves and activates the human coronavirus 229E (HCoV-229E) spike glycoprotein which facilitate virus-cell membrane fusions; spike proteins are synthesized and maintained in precursor intermediate folding states and proteolysis permits the refolding and energy release required to create stable virus-cell linkages and membrane coalescence. Preferentially cleaves the C-terminal side of arginine residues at the P1 position of certain peptides, cleaving Boc-Phe-Ser-Arg-4-methylcoumaryl-7-amide most efficiently and having an optimum pH of 8.6 with this substrate. This chain is Transmembrane protease serine 11D (TMPRSS11D), found in Homo sapiens (Human).